The primary structure comprises 154 residues: MDGARVSDEEVARRVATLKRLKALLQEQREKFAQYLVVLQQQQVAIEAQDAETVLRHVELEEALLGDVQRVQKALAPMEQLCLQQASGVQELAQLRCDLSRVQEQVYAQNEKNRALLRAQVSDLRQQLDEFRAARGLVSYEDGEDSGTVIDLSL.

2 coiled-coil regions span residues 8 to 48 (DEEV…AIEA) and 89 to 138 (VQEL…RGLV).

This is an uncharacterized protein from Treponema pallidum (strain Nichols).